The chain runs to 376 residues: Alpha-2,8-sialyltransferase 8E (376 aa).

Residues 17–37 (TLLFIFICAFALVTLLQQILY) form a helical membrane-spanning segment. The N-linked (GlcNAc...) asparagine glycan is linked to Asn-56. 2 disulfide bridges follow: Cys-164/Cys-313 and Cys-178/Cys-373. Residues Asn-192 and 214–216 (NPS) each bind substrate. An N-linked (GlcNAc...) asparagine glycan is attached at Asn-241. 300–302 (STG) is a binding site for substrate. The active-site Proton donor/acceptor is His-348.

Belongs to the glycosyltransferase 29 family. As to expression, expressed in liver.

The protein resides in the golgi apparatus membrane. The enzyme catalyses a ganglioside GT1b (d18:1(4E)) + CMP-N-acetyl-beta-neuraminate = a ganglioside GQ1b (d18:1(4E)) + CMP + H(+). It catalyses the reaction a ganglioside GQ1c (d18:1(4E)) + CMP-N-acetyl-beta-neuraminate = a ganglioside GP1c (d18:1(4E)) + CMP + H(+). It carries out the reaction a ganglioside GD3 (d18:1(4E)) + CMP-N-acetyl-beta-neuraminate = a ganglioside GT3 (d18:1(4E)) + CMP + H(+). The catalysed reaction is a ganglioside GD1a (d18:1(4E)) + CMP-N-acetyl-beta-neuraminate = a ganglioside GT1a (d18:1(4E)) + CMP + H(+). The enzyme catalyses a ganglioside GM1b (d18:1(4E)) + CMP-N-acetyl-beta-neuraminate = a ganglioside GD1c (d18:1(4E)) + CMP + H(+). It participates in protein modification; protein glycosylation. Involved in the synthesis of gangliosides GD1c, GT1a, GQ1b, GP1c and GT3 from GD1a, GT1b, GM1b and GD3 respectively. This is Alpha-2,8-sialyltransferase 8E from Rattus norvegicus (Rat).